A 240-amino-acid polypeptide reads, in one-letter code: Ribosomal RNA small subunit methyltransferase J (240 aa).

Residues 93–94 and D162 contribute to the S-adenosyl-L-methionine site; that span reads RD.

It belongs to the methyltransferase superfamily. RsmJ family.

It is found in the cytoplasm. It catalyses the reaction guanosine(1516) in 16S rRNA + S-adenosyl-L-methionine = N(2)-methylguanosine(1516) in 16S rRNA + S-adenosyl-L-homocysteine + H(+). Functionally, specifically methylates the guanosine in position 1516 of 16S rRNA. The polypeptide is Ribosomal RNA small subunit methyltransferase J (Francisella philomiragia subsp. philomiragia (strain ATCC 25017 / CCUG 19701 / FSC 153 / O#319-036)).